A 161-amino-acid polypeptide reads, in one-letter code: Regulator of ribonuclease activity A (161 aa).

The protein belongs to the RraA family. Homotrimer. Binds to both RNA-binding sites in the C-terminal region of Rne and to RhlB.

Its subcellular location is the cytoplasm. Functionally, globally modulates RNA abundance by binding to RNase E (Rne) and regulating its endonucleolytic activity. Can modulate Rne action in a substrate-dependent manner by altering the composition of the degradosome. Modulates RNA-binding and helicase activities of the degradosome. This chain is Regulator of ribonuclease activity A, found in Erwinia tasmaniensis (strain DSM 17950 / CFBP 7177 / CIP 109463 / NCPPB 4357 / Et1/99).